A 969-amino-acid polypeptide reads, in one-letter code: RNA polymerase-associated protein RapA (969 aa).

One can recognise a Helicase ATP-binding domain in the interval 164–334 (EVGRRHAPRV…FARLRLLDPD (171 aa)). 177 to 184 (DEVGLGKT) contacts ATP. A DEAH box motif is present at residues 280 to 283 (DEAH). Residues 492–686 (RVNWLLEKVK…ELKSQLEQGR (195 aa)) form the Helicase C-terminal domain.

It belongs to the SNF2/RAD54 helicase family. RapA subfamily. In terms of assembly, interacts with the RNAP. Has a higher affinity for the core RNAP than for the holoenzyme. Its ATPase activity is stimulated by binding to RNAP.

Functionally, transcription regulator that activates transcription by stimulating RNA polymerase (RNAP) recycling in case of stress conditions such as supercoiled DNA or high salt concentrations. Probably acts by releasing the RNAP, when it is trapped or immobilized on tightly supercoiled DNA. Does not activate transcription on linear DNA. Probably not involved in DNA repair. In Vibrio parahaemolyticus serotype O3:K6 (strain RIMD 2210633), this protein is RNA polymerase-associated protein RapA.